We begin with the raw amino-acid sequence, 138 residues long: L-ectoine synthase (138 aa).

The protein belongs to the ectoine synthase family.

The catalysed reaction is (2S)-4-acetamido-2-aminobutanoate = L-ectoine + H2O. The protein operates within amine and polyamine biosynthesis; ectoine biosynthesis; L-ectoine from L-aspartate 4-semialdehyde: step 3/3. In terms of biological role, catalyzes the circularization of gamma-N-acetyl-alpha,gamma-diaminobutyric acid (ADABA) to ectoine (1,4,5,6-tetrahydro-2-methyl-4-pyrimidine carboxylic acid), which is an excellent osmoprotectant. The sequence is that of L-ectoine synthase from Vibrio cholerae serotype O1 (strain ATCC 39541 / Classical Ogawa 395 / O395).